The sequence spans 611 residues: Inhibitor of apoptosis protein (611 aa).

3 BIR repeats span residues 30 to 97, 176 to 242, and 262 to 329; these read ELYR…CSFV, EEAR…CPFV, and HEAR…CEYL. Zn(2+) is bound by residues C299, C302, H319, and C326. The CARD domain occupies 446–536; sequence VASDDLSLIR…VLYKDLFVEK (91 aa). An RING-type zinc finger spans residues 564-599; sequence CKVCMDKEVSIVFIPCGHLVVCKECAPSLRKCPICR.

Belongs to the IAP family. In terms of tissue distribution, cells of the T-lymphocyte lineage. Found in both cortical and medullary cells of the thymus. Expressed at relatively high levels also in spleen, bursa, intestine and lung and at very low levels in testis, brain and skeletal muscle.

It localises to the nucleus. The protein resides in the cytoplasm. Functionally, apoptotic suppressor. In Gallus gallus (Chicken), this protein is Inhibitor of apoptosis protein (ITA).